Here is a 222-residue protein sequence, read N- to C-terminus: Flagellar L-ring protein (222 aa).

Positions 1 to 21 are cleaved as a signal peptide; it reads MQTFLYPRTWLILGLLLLGSG. C22 carries N-palmitoyl cysteine lipidation. C22 carries S-diacylglycerol cysteine lipidation.

The protein belongs to the FlgH family. As to quaternary structure, the basal body constitutes a major portion of the flagellar organelle and consists of four rings (L,P,S, and M) mounted on a central rod.

The protein localises to the cell outer membrane. Its subcellular location is the bacterial flagellum basal body. Functionally, assembles around the rod to form the L-ring and probably protects the motor/basal body from shearing forces during rotation. The protein is Flagellar L-ring protein of Methylobacillus flagellatus (strain ATCC 51484 / DSM 6875 / VKM B-1610 / KT).